Reading from the N-terminus, the 125-residue chain is Large ribosomal subunit protein bL21 (125 aa).

Residues 75–89 (FKKRRRQNSKRKRGH) show a composition bias toward basic residues. 2 disordered regions span residues 75 to 94 (FKKR…QDLT) and 103 to 125 (AGGA…APEA). A compositionally biased stretch (low complexity) spans 106 to 125 (ASPAAAAASSETPAASAPEA).

This sequence belongs to the bacterial ribosomal protein bL21 family. As to quaternary structure, part of the 50S ribosomal subunit. Contacts protein L20.

Functionally, this protein binds to 23S rRNA in the presence of protein L20. This chain is Large ribosomal subunit protein bL21, found in Methylocella silvestris (strain DSM 15510 / CIP 108128 / LMG 27833 / NCIMB 13906 / BL2).